The following is a 325-amino-acid chain: Beta-ketoacyl-[acyl-carrier-protein] synthase III (325 aa).

Catalysis depends on residues C119 and H252. An ACP-binding region spans residues 253–257 (QANLR). The active site involves N282.

Belongs to the thiolase-like superfamily. FabH family. Homodimer.

It is found in the cytoplasm. It catalyses the reaction malonyl-[ACP] + acetyl-CoA + H(+) = 3-oxobutanoyl-[ACP] + CO2 + CoA. Its pathway is lipid metabolism; fatty acid biosynthesis. Functionally, catalyzes the condensation reaction of fatty acid synthesis by the addition to an acyl acceptor of two carbons from malonyl-ACP. Catalyzes the first condensation reaction which initiates fatty acid synthesis and may therefore play a role in governing the total rate of fatty acid production. Possesses both acetoacetyl-ACP synthase and acetyl transacylase activities. Its substrate specificity determines the biosynthesis of branched-chain and/or straight-chain of fatty acids. The sequence is that of Beta-ketoacyl-[acyl-carrier-protein] synthase III from Polaromonas naphthalenivorans (strain CJ2).